The chain runs to 51 residues: ATP synthase F(1) complex subunit epsilon, mitochondrial (51 aa).

N6-acetyllysine; alternate occurs at positions 21, 32, and 37. 3 positions are modified to N6-succinyllysine; alternate: lysine 21, lysine 32, and lysine 37. N6-acetyllysine is present on lysine 44.

Belongs to the eukaryotic ATPase epsilon family. As to quaternary structure, component of the ATP synthase complex composed at least of ATP5F1A/subunit alpha, ATP5F1B/subunit beta, ATP5MC1/subunit c (homooctomer), MT-ATP6/subunit a, MT-ATP8/subunit 8, ATP5ME/subunit e, ATP5MF/subunit f, ATP5MG/subunit g, ATP5MK/subunit k, ATP5MJ/subunit j, ATP5F1C/subunit gamma, ATP5F1D/subunit delta, ATP5F1E/subunit epsilon, ATP5PF/subunit F6, ATP5PB/subunit b, ATP5PD/subunit d, ATP5PO/subunit OSCP. ATP synthase complex consists of a soluble F(1) head domain (subunits alpha(3) and beta(3)) - the catalytic core - and a membrane F(0) domain - the membrane proton channel (subunits c, a, 8, e, f, g, k and j). These two domains are linked by a central stalk (subunits gamma, delta, and epsilon) rotating inside the F1 region and a stationary peripheral stalk (subunits F6, b, d, and OSCP).

The protein localises to the mitochondrion. The protein resides in the mitochondrion inner membrane. Subunit epsilon, of the mitochondrial membrane ATP synthase complex (F(1)F(0) ATP synthase or Complex V) that produces ATP from ADP in the presence of a proton gradient across the membrane which is generated by electron transport complexes of the respiratory chain. ATP synthase complex consist of a soluble F(1) head domain - the catalytic core - and a membrane F(1) domain - the membrane proton channel. These two domains are linked by a central stalk rotating inside the F(1) region and a stationary peripheral stalk. During catalysis, ATP synthesis in the catalytic domain of F(1) is coupled via a rotary mechanism of the central stalk subunits to proton translocation. In vivo, can only synthesize ATP although its ATP hydrolase activity can be activated artificially in vitro. May be essential for the assembly of F(1) and may play an important role in the incorporation of the hydrophobic subunit c into the F(1)-c oligomer rotor of the mitochondrial ATP synthase complex. This is ATP synthase F(1) complex subunit epsilon, mitochondrial from Bos taurus (Bovine).